We begin with the raw amino-acid sequence, 209 residues long: Uracil phosphoribosyltransferase (209 aa).

5-phospho-alpha-D-ribose 1-diphosphate is bound by residues R79, R104, and 131–139 (DPMLATGGS). Uracil is bound by residues I194 and 199–201 (GDA). Position 200 (D200) interacts with 5-phospho-alpha-D-ribose 1-diphosphate.

This sequence belongs to the UPRTase family. It depends on Mg(2+) as a cofactor.

The enzyme catalyses UMP + diphosphate = 5-phospho-alpha-D-ribose 1-diphosphate + uracil. The protein operates within pyrimidine metabolism; UMP biosynthesis via salvage pathway; UMP from uracil: step 1/1. With respect to regulation, allosterically activated by GTP. Functionally, catalyzes the conversion of uracil and 5-phospho-alpha-D-ribose 1-diphosphate (PRPP) to UMP and diphosphate. The polypeptide is Uracil phosphoribosyltransferase (Exiguobacterium sp. (strain ATCC BAA-1283 / AT1b)).